The following is a 166-amino-acid chain: MNRTALYAGSFDPVTNGHVDVIRQACRLVPRLVIAIGVHPGKTPLFGAEERAELLREICAPLAAAEGAALDVVTFDDLAVSAARRVGASLFIRGLRDGTDLDYEMQLAGMNGAMAPEVQTVFLPASTGVRPITATLVRQIAAMGGDVRPFVPDLVAERLRARFAKP.

Residue S10 participates in substrate binding. ATP-binding positions include 10–11 (SF) and H18. Substrate-binding residues include K42, A79, and R93. ATP contacts are provided by residues 94 to 96 (GLR), E104, and 129 to 135 (VRPITAT).

Belongs to the bacterial CoaD family. Homohexamer. It depends on Mg(2+) as a cofactor.

Its subcellular location is the cytoplasm. The enzyme catalyses (R)-4'-phosphopantetheine + ATP + H(+) = 3'-dephospho-CoA + diphosphate. It participates in cofactor biosynthesis; coenzyme A biosynthesis; CoA from (R)-pantothenate: step 4/5. Reversibly transfers an adenylyl group from ATP to 4'-phosphopantetheine, yielding dephospho-CoA (dPCoA) and pyrophosphate. This chain is Phosphopantetheine adenylyltransferase, found in Methylobacterium sp. (strain 4-46).